We begin with the raw amino-acid sequence, 652 residues long: Na(+)/H(+) antiporter NhaA 3 (652 aa).

The tract at residues 1–428 (MTGEIPRGRR…GASLTTWLVF (428 aa)) is na(+)/H(+) antiporter NhaA. 11 helical membrane-spanning segments follow: residues 32 to 52 (ETGS…WVNL), 78 to 98 (LRFW…GLEV), 114 to 134 (MLPL…YLAF), 142 to 162 (VGWG…LAVL), 173 to 193 (FLLT…AIAY), 200 to 220 (MALF…AAGV), 227 to 249 (LLLG…VVGL), 306 to 326 (HPWA…GVVV), 342 to 362 (GVLF…SMLV), 376 to 396 (WAAI…ALLI), and 411 to 431 (VGIL…FRLA). A Thioredoxin domain is found at 429 to 623 (RLAARLAPAR…LSAAVMSAFA (195 aa)). The interval 626–652 (RLRPEGGREPDHRSEAGSEQPDEEPGT) is disordered. Basic and acidic residues predominate over residues 627 to 641 (LRPEGGREPDHRSEA).

The protein in the N-terminal section; belongs to the NhaA Na(+)/H(+) (TC 2.A.33) antiporter family.

The protein resides in the cell membrane. The catalysed reaction is Na(+)(in) + 2 H(+)(out) = Na(+)(out) + 2 H(+)(in). Functionally, na(+)/H(+) antiporter that extrudes sodium in exchange for external protons. This Salinispora tropica (strain ATCC BAA-916 / DSM 44818 / JCM 13857 / NBRC 105044 / CNB-440) protein is Na(+)/H(+) antiporter NhaA 3.